A 298-amino-acid polypeptide reads, in one-letter code: Pyruvate synthase subunit PorB (298 aa).

[4Fe-4S] cluster contacts are provided by cysteine 19, cysteine 22, cysteine 47, and cysteine 218.

Heterotetramer of one alpha, one beta, one delta and one gamma chain. [4Fe-4S] cluster is required as a cofactor.

It catalyses the reaction 2 oxidized [2Fe-2S]-[ferredoxin] + pyruvate + CoA = 2 reduced [2Fe-2S]-[ferredoxin] + acetyl-CoA + CO2 + H(+). In Methanocaldococcus jannaschii (strain ATCC 43067 / DSM 2661 / JAL-1 / JCM 10045 / NBRC 100440) (Methanococcus jannaschii), this protein is Pyruvate synthase subunit PorB (porB).